The chain runs to 255 residues: Indole-3-glycerol phosphate synthase (255 aa).

It belongs to the TrpC family.

The enzyme catalyses 1-(2-carboxyphenylamino)-1-deoxy-D-ribulose 5-phosphate + H(+) = (1S,2R)-1-C-(indol-3-yl)glycerol 3-phosphate + CO2 + H2O. It functions in the pathway amino-acid biosynthesis; L-tryptophan biosynthesis; L-tryptophan from chorismate: step 4/5. This is Indole-3-glycerol phosphate synthase from Streptococcus thermophilus (strain ATCC BAA-491 / LMD-9).